The primary structure comprises 141 residues: Eukaryotic translation initiation factor 1A (141 aa).

The segment covering 1–15 has biased composition (basic residues); sequence MPKNKGKGGKNRRRG. Residues 1–28 are disordered; it reads MPKNKGKGGKNRRRGKNENEQKRELQFK. The span at 16–28 shows a compositional bias: basic and acidic residues; sequence KNENEQKRELQFK. An S1-like domain is found at 21–95; it reads QKRELQFKEE…DKADVILRYN (75 aa).

The protein belongs to the eIF-1A family.

Its function is as follows. Seems to be required for maximal rate of protein biosynthesis. Enhances ribosome dissociation into subunits and stabilizes the binding of the initiator Met-tRNA(I) to 40 S ribosomal subunits. The sequence is that of Eukaryotic translation initiation factor 1A (eif1a) from Dictyostelium discoideum (Social amoeba).